The following is a 331-amino-acid chain: Protein PER1 homolog (331 aa).

A signal peptide spans 1–24; the sequence is MRVLRNFTIFFLFTALSLFRQISA. At 25–100 the chain is on the lumenal side; sequence SAGDLHPVYV…QYHGKWYFIR (76 aa). Residues 101–121 traverse the membrane as a helical segment; that stretch reads VFGIQELFSVFFSMLNFMIHY. Residues 122-139 lie on the Cytoplasmic side of the membrane; it reads NGYHIMRRCIPDEHPAKR. The chain crosses the membrane as a helical span at residues 140 to 160; the sequence is LCLSWAIVGMNAWVWSSVFHI. The Lumenal portion of the chain corresponds to 161–168; sequence RDTPITEK. A helical transmembrane segment spans residues 169–189; it reads LDYFSAGAFVLFGSYCTLILM. The Cytoplasmic portion of the chain corresponds to 190–199; that stretch reads LRLDQLPGGK. Residues 200 to 220 traverse the membrane as a helical segment; sequence LLCWIIGVIFIAAFIAHVSYL. Topologically, residues 221–232 are lumenal; the sequence is SFYSFDYGYNMK. The chain crosses the membrane as a helical span at residues 233 to 250; sequence ANVAVGLVQNILWYYYSW. Residues 251–263 lie on the Cytoplasmic side of the membrane; it reads SNRNSGLYWTRWP. A helical membrane pass occupies residues 264–284; sequence AYIVTSLMLATSLELFDFSPI. The Lumenal portion of the chain corresponds to 285–289; sequence ANLID. A helical membrane pass occupies residues 290 to 310; sequence AHALWHLSTVPITHYLYGFVV. The Cytoplasmic segment spans residues 311–331; that stretch reads RKCSYDLTKGTFKIKAYDSSR.

The protein belongs to the PGAP3/PER1 family.

It localises to the endoplasmic reticulum membrane. The protein resides in the vacuole membrane. Involved in the lipid remodeling steps of GPI-anchor maturation. Lipid remodeling steps consist in the generation of 2 saturated fatty chains at the sn-2 position of GPI-anchors proteins. Required for phospholipase A2 activity that removes an acyl-chain at the sn-2 position of GPI-anchors during the remodeling of GPI. Required for efficient transport of GPI-anchor proteins. The polypeptide is Protein PER1 homolog (Schizosaccharomyces pombe (strain 972 / ATCC 24843) (Fission yeast)).